The primary structure comprises 475 residues: Sulfate adenylyltransferase subunit 1 (475 aa).

Residues 25–239 (KSLLRFLTCG…EVLETVEIQR (215 aa)) enclose the tr-type G domain. The tract at residues 34–41 (GSVDDGKS) is G1. Residue 34–41 (GSVDDGKS) participates in GTP binding. The segment at 92-96 (GITID) is G2. Residues 113–116 (DTPG) are G3. Residues 113 to 117 (DTPGH) and 168 to 171 (NKMD) contribute to the GTP site. A G4 region spans residues 168–171 (NKMD). Residues 206 to 208 (SAL) form a G5 region.

Belongs to the TRAFAC class translation factor GTPase superfamily. Classic translation factor GTPase family. CysN/NodQ subfamily. In terms of assembly, heterodimer composed of CysD, the smaller subunit, and CysN.

The enzyme catalyses sulfate + ATP + H(+) = adenosine 5'-phosphosulfate + diphosphate. Its pathway is sulfur metabolism; hydrogen sulfide biosynthesis; sulfite from sulfate: step 1/3. In terms of biological role, with CysD forms the ATP sulfurylase (ATPS) that catalyzes the adenylation of sulfate producing adenosine 5'-phosphosulfate (APS) and diphosphate, the first enzymatic step in sulfur assimilation pathway. APS synthesis involves the formation of a high-energy phosphoric-sulfuric acid anhydride bond driven by GTP hydrolysis by CysN coupled to ATP hydrolysis by CysD. This Escherichia coli O139:H28 (strain E24377A / ETEC) protein is Sulfate adenylyltransferase subunit 1.